Reading from the N-terminus, the 218-residue chain is Small ribosomal subunit protein uS3c (218 aa).

Residues Val-47–Ala-118 enclose the KH type-2 domain.

This sequence belongs to the universal ribosomal protein uS3 family. In terms of assembly, part of the 30S ribosomal subunit.

It is found in the plastid. The protein localises to the chloroplast. The chain is Small ribosomal subunit protein uS3c (rps3) from Atropa belladonna (Belladonna).